The sequence spans 214 residues: MMRRRNKKTKTVISNPETLEERNKFDEIPHDLVIEILGRLPAKSVARFLTVSKLWATSIRSLDFIKSYPLGSSSKPRTLVASKQVVANPSTGRTIPLPRVKTRRTIATSFFGYDSVSDQYKVLCMTVKAYGDLRDESSQHQVFTLGAKKKSFRMIDTSIIPHRPCSNGVCIDSVVYYVAKTGAGMLHLCIMRFDLSSEILDLFTSLPQEIRPPS.

In terms of domain architecture, F-box spans 22–68 (RNKFDEIPHDLVIEILGRLPAKSVARFLTVSKLWATSIRSLDFIKSY).

The protein is Putative F-box protein At5g15670 of Arabidopsis thaliana (Mouse-ear cress).